The chain runs to 260 residues: Phosphate import ATP-binding protein PstB 2 (260 aa).

Positions 9-255 (IKVKDLSFYY…PLDSRTRDYV (247 aa)) constitute an ABC transporter domain. 41 to 48 (GPSGCGKS) lines the ATP pocket.

This sequence belongs to the ABC transporter superfamily. Phosphate importer (TC 3.A.1.7) family. As to quaternary structure, the complex is composed of two ATP-binding proteins (PstB), two transmembrane proteins (PstC and PstA) and a solute-binding protein (PstS).

The protein localises to the cell inner membrane. The catalysed reaction is phosphate(out) + ATP + H2O = ADP + 2 phosphate(in) + H(+). In terms of biological role, part of the ABC transporter complex PstSACB involved in phosphate import. Responsible for energy coupling to the transport system. The chain is Phosphate import ATP-binding protein PstB 2 from Nostoc sp. (strain PCC 7120 / SAG 25.82 / UTEX 2576).